We begin with the raw amino-acid sequence, 395 residues long: Ribosomal RNA small subunit methyltransferase H (395 aa).

S-adenosyl-L-methionine is bound by residues 101-103 (GGH), D120, Y147, D171, and Q178.

This sequence belongs to the methyltransferase superfamily. RsmH family.

The protein resides in the cytoplasm. It carries out the reaction cytidine(1402) in 16S rRNA + S-adenosyl-L-methionine = N(4)-methylcytidine(1402) in 16S rRNA + S-adenosyl-L-homocysteine + H(+). In terms of biological role, specifically methylates the N4 position of cytidine in position 1402 (C1402) of 16S rRNA. The protein is Ribosomal RNA small subunit methyltransferase H of Mycobacterium marinum (strain ATCC BAA-535 / M).